The chain runs to 37 residues: Large ribosomal subunit protein bL36 (37 aa).

The protein belongs to the bacterial ribosomal protein bL36 family.

The polypeptide is Large ribosomal subunit protein bL36 (Desulforapulum autotrophicum (strain ATCC 43914 / DSM 3382 / VKM B-1955 / HRM2) (Desulfobacterium autotrophicum)).